The following is a 374-amino-acid chain: Pulmonary surfactant-associated protein D (374 aa).

The N-terminal stretch at 1–19 (MLPFLSMLVLLVQPLGNLG) is a signal peptide. S-nitrosocysteine occurs at positions 34 and 39. Residues 38 to 222 (MCSPTENGLP…GIKGESGLPD (185 aa)) are disordered. A Collagen-like domain is found at 45–221 (GLPGRDGRDG…RGIKGESGLP (177 aa)). The segment covering 49 to 64 (RDGRDGREGPRGEKGD) has biased composition (basic and acidic residues). Over residues 70–79 (PMGLSGLQGP) the composition is skewed to low complexity. N-linked (GlcNAc...) asparagine glycosylation is present at N89. 2 stretches are compositionally biased toward low complexity: residues 137 to 149 (KGEA…VGAP) and 169 to 200 (APGV…RGPP). Residues 203-215 (KGDRGVPGDRGIK) show a composition bias toward basic and acidic residues. The stretch at 222 to 253 (DSAALRQQMEALKGKLQRLEVAFSHYQKAALF) forms a coiled coil. The C-type lectin domain occupies 259-374 (VGDKIFRTAD…GEQRLVICEF (116 aa)). 2 disulfide bridges follow: C280-C372 and C350-C364.

It belongs to the SFTPD family. In terms of assembly, oligomeric complex of 4 set of homotrimers. S-nitrosylation at Cys-34 and Cys-39 alters the quaternary structure which results in a pro-inflammatory chemoattractive signaling activity with macrophages.

The protein resides in the secreted. The protein localises to the extracellular space. Its subcellular location is the extracellular matrix. It localises to the surface film. Contributes to the lung's defense against inhaled microorganisms, organic antigens and toxins. Interacts with compounds such as bacterial lipopolysaccharides, oligosaccharides and fatty acids and modulates leukocyte action in immune response. May participate in the extracellular reorganization or turnover of pulmonary surfactant. Binds strongly maltose residues and to a lesser extent other alpha-glucosyl moieties. The polypeptide is Pulmonary surfactant-associated protein D (Sftpd) (Mus musculus (Mouse)).